A 385-amino-acid polypeptide reads, in one-letter code: Acetate kinase (385 aa).

N8 lines the Mg(2+) pocket. K15 is an ATP binding site. R85 serves as a coordination point for substrate. D142 (proton donor/acceptor) is an active-site residue. Residues 200–204, 275–277, and 323–327 contribute to the ATP site; these read HLGNG, DMR, and GIGEN. Mg(2+) is bound at residue E373.

The protein belongs to the acetokinase family. Homodimer. Requires Mg(2+) as cofactor. It depends on Mn(2+) as a cofactor.

It localises to the cytoplasm. The catalysed reaction is acetate + ATP = acetyl phosphate + ADP. It functions in the pathway metabolic intermediate biosynthesis; acetyl-CoA biosynthesis; acetyl-CoA from acetate: step 1/2. In terms of biological role, catalyzes the formation of acetyl phosphate from acetate and ATP. Can also catalyze the reverse reaction. This chain is Acetate kinase, found in Francisella tularensis subsp. holarctica (strain OSU18).